A 450-amino-acid chain; its full sequence is UDP-N-acetylmuramoylalanine--D-glutamate ligase (450 aa).

115–121 (GTNGKTT) provides a ligand contact to ATP.

Belongs to the MurCDEF family.

It localises to the cytoplasm. It catalyses the reaction UDP-N-acetyl-alpha-D-muramoyl-L-alanine + D-glutamate + ATP = UDP-N-acetyl-alpha-D-muramoyl-L-alanyl-D-glutamate + ADP + phosphate + H(+). The protein operates within cell wall biogenesis; peptidoglycan biosynthesis. Its function is as follows. Cell wall formation. Catalyzes the addition of glutamate to the nucleotide precursor UDP-N-acetylmuramoyl-L-alanine (UMA). This is UDP-N-acetylmuramoylalanine--D-glutamate ligase from Desulfatibacillum aliphaticivorans.